We begin with the raw amino-acid sequence, 97 residues long: Citrate lyase acyl carrier protein (97 aa).

An O-(phosphoribosyl dephospho-coenzyme A)serine modification is found at Ser-14.

This sequence belongs to the CitD family. As to quaternary structure, oligomer with a subunit composition of (alpha,beta,gamma)6.

It is found in the cytoplasm. In terms of biological role, covalent carrier of the coenzyme of citrate lyase. The sequence is that of Citrate lyase acyl carrier protein from Klebsiella pneumoniae subsp. pneumoniae (strain ATCC 700721 / MGH 78578).